A 143-amino-acid chain; its full sequence is Transcriptional regulator MraZ (143 aa).

SpoVT-AbrB domains follow at residues 5–47 (EFQH…TLTE) and 76–119 (AVEV…DRKL).

It belongs to the MraZ family. In terms of assembly, forms oligomers.

Its subcellular location is the cytoplasm. It is found in the nucleoid. The sequence is that of Transcriptional regulator MraZ from Macrococcus caseolyticus (strain JCSC5402) (Macrococcoides caseolyticum).